The chain runs to 418 residues: Inner capsid protein sigma-2 (418 aa).

Belongs to the orthoreovirus sigma-1 protein family. In terms of assembly, interacts with protein mu-NS; in viral inclusions.

The protein resides in the virion. Its function is as follows. Inner capsid (core) component. The polypeptide is Inner capsid protein sigma-2 (S2) (Mammalia (T1L)).